The following is a 314-amino-acid chain: Cyclic di-GMP binding protein TDE_0214 (314 aa).

A PilZ domain is found at 146–234 (QKRRNERVVI…KTVRTEPVEG (89 aa)). Residues 288 to 300 (TPVSSPIGTNTAP) are compositionally biased toward polar residues. Residues 288 to 314 (TPVSSPIGTNTAPLTPPPADSAPEQIS) form a disordered region.

Its function is as follows. Cyclic-di-GMP binding protein that plays important roles in motility, chemotaxis, biofilm formation and virulence. The polypeptide is Cyclic di-GMP binding protein TDE_0214 (Treponema denticola (strain ATCC 35405 / DSM 14222 / CIP 103919 / JCM 8153 / KCTC 15104)).